We begin with the raw amino-acid sequence, 668 residues long: UvrABC system protein B (668 aa).

A Helicase ATP-binding domain is found at 36–423 (DNIKGGEKAQ…TETVVEQIIR (388 aa)). 49–56 (GATGTGKT) is an ATP binding site. The Beta-hairpin signature appears at 102–125 (YYDYYQPEAYVPSSDTYIEKDSSI). The region spanning 440–606 (QMDDLLGEIN…TIKKEIRDLI (167 aa)) is the Helicase C-terminal domain. The UVR domain maps to 632 to 667 (QEAIKKLQKQMHEAAELLDFELAAQIRDMVLELKSM).

Belongs to the UvrB family. Forms a heterotetramer with UvrA during the search for lesions. Interacts with UvrC in an incision complex.

It is found in the cytoplasm. In terms of biological role, the UvrABC repair system catalyzes the recognition and processing of DNA lesions. A damage recognition complex composed of 2 UvrA and 2 UvrB subunits scans DNA for abnormalities. Upon binding of the UvrA(2)B(2) complex to a putative damaged site, the DNA wraps around one UvrB monomer. DNA wrap is dependent on ATP binding by UvrB and probably causes local melting of the DNA helix, facilitating insertion of UvrB beta-hairpin between the DNA strands. Then UvrB probes one DNA strand for the presence of a lesion. If a lesion is found the UvrA subunits dissociate and the UvrB-DNA preincision complex is formed. This complex is subsequently bound by UvrC and the second UvrB is released. If no lesion is found, the DNA wraps around the other UvrB subunit that will check the other stand for damage. This is UvrABC system protein B from Streptococcus thermophilus (strain CNRZ 1066).